The chain runs to 140 residues: Phosphopantetheine adenylyltransferase (140 aa).

A substrate-binding site is contributed by S9. ATP-binding positions include 9–10 (SF) and H17. Residues K41, T74, and R88 each coordinate substrate. ATP is bound by residues 89–91 (GLR), E99, and 124–130 (KRSLSST).

It belongs to the bacterial CoaD family. In terms of assembly, homohexamer. Requires Mg(2+) as cofactor.

The protein localises to the cytoplasm. It catalyses the reaction (R)-4'-phosphopantetheine + ATP + H(+) = 3'-dephospho-CoA + diphosphate. Its pathway is cofactor biosynthesis; coenzyme A biosynthesis; CoA from (R)-pantothenate: step 4/5. In terms of biological role, reversibly transfers an adenylyl group from ATP to 4'-phosphopantetheine, yielding dephospho-CoA (dPCoA) and pyrophosphate. This Mycoplasma capricolum subsp. capricolum (strain California kid / ATCC 27343 / NCTC 10154) protein is Phosphopantetheine adenylyltransferase.